The sequence spans 404 residues: Glucose-1-phosphate adenylyltransferase 2 (404 aa).

Alpha-D-glucose 1-phosphate contacts are provided by residues Y97, G162, 177-178, and S195; that span reads EK.

The protein belongs to the bacterial/plant glucose-1-phosphate adenylyltransferase family. In terms of assembly, homotetramer.

The enzyme catalyses alpha-D-glucose 1-phosphate + ATP + H(+) = ADP-alpha-D-glucose + diphosphate. Its pathway is glycan biosynthesis; glycogen biosynthesis. Functionally, involved in the biosynthesis of ADP-glucose, a building block required for the elongation reactions to produce glycogen. Catalyzes the reaction between ATP and alpha-D-glucose 1-phosphate (G1P) to produce pyrophosphate and ADP-Glc. The chain is Glucose-1-phosphate adenylyltransferase 2 from Vibrio vulnificus (strain CMCP6).